Reading from the N-terminus, the 236-residue chain is Dolichol-phosphate mannosyltransferase (236 aa).

Residues Pro9, Tyr11, Glu13, Ile40, Asp42, Asp95, Ala96, Asp97, Arg124, Val160, Arg211, and Lys217 each contribute to the GDP-alpha-D-mannose site. A Mg(2+)-binding site is contributed by Asp97. Residue Asp97 participates in Mn(2+) binding.

Belongs to the glycosyltransferase 2 family. Component of the dolichol-phosphate mannose (DPM) synthase complex composed of dpm1, dpm2 and dpm3. The cofactor is Mg(2+). Requires Mn(2+) as cofactor. Ca(2+) serves as cofactor.

It localises to the endoplasmic reticulum. It carries out the reaction a di-trans,poly-cis-dolichyl phosphate + GDP-alpha-D-mannose = a di-trans,poly-cis-dolichyl beta-D-mannosyl phosphate + GDP. It participates in protein modification; protein glycosylation. In terms of biological role, transfers mannose from GDP-mannose to dolichol monophosphate to form dolichol phosphate mannose (Dol-P-Man) which is the mannosyl donor in pathways leading to N-glycosylation, glycosyl phosphatidylinositol membrane anchoring, and O-mannosylation of proteins. This is Dolichol-phosphate mannosyltransferase from Schizosaccharomyces pombe (strain 972 / ATCC 24843) (Fission yeast).